We begin with the raw amino-acid sequence, 592 residues long: Aspartate--tRNA(Asp/Asn) ligase (592 aa).

Glu-172 contributes to the L-aspartate binding site. An aspartate region spans residues 196–199 (QLFK). Arg-218 lines the L-aspartate pocket. Residues 218–220 (RDE) and Gln-227 contribute to the ATP site. His-450 contributes to the L-aspartate binding site. Glu-484 is a binding site for ATP. Arg-491 provides a ligand contact to L-aspartate. 536–539 (GLDR) provides a ligand contact to ATP.

Belongs to the class-II aminoacyl-tRNA synthetase family. Type 1 subfamily. Homodimer.

The protein resides in the cytoplasm. The enzyme catalyses tRNA(Asx) + L-aspartate + ATP = L-aspartyl-tRNA(Asx) + AMP + diphosphate. Aspartyl-tRNA synthetase with relaxed tRNA specificity since it is able to aspartylate not only its cognate tRNA(Asp) but also tRNA(Asn). Reaction proceeds in two steps: L-aspartate is first activated by ATP to form Asp-AMP and then transferred to the acceptor end of tRNA(Asp/Asn). The polypeptide is Aspartate--tRNA(Asp/Asn) ligase (Thioalkalivibrio sulfidiphilus (strain HL-EbGR7)).